We begin with the raw amino-acid sequence, 454 residues long: Metacaspase-1A (454 aa).

A compositionally biased stretch (gly residues) spans 1 to 16 (MSYGYPGQGYGPGGGH). Residues 1–129 (MSYGYPGQGY…GHQTRNQGSH (129 aa)) form a disordered region. Composition is skewed to low complexity over residues 38–47 (YSNPGQGQYN), 59–80 (YHQQ…YPPQ), 88–101 (GQQQ…HSQR), and 109–120 (GYDIYGYPIGSG). Residues histidine 244 and cysteine 300 contribute to the active site.

Belongs to the peptidase C14B family.

In terms of biological role, involved in cell death (apoptosis). The protein is Metacaspase-1A (casA) of Neurospora crassa (strain ATCC 24698 / 74-OR23-1A / CBS 708.71 / DSM 1257 / FGSC 987).